Consider the following 296-residue polypeptide: 33 kDa chaperonin (296 aa).

Cystine bridges form between Cys-238/Cys-240 and Cys-271/Cys-274.

The protein belongs to the HSP33 family. In terms of processing, under oxidizing conditions two disulfide bonds are formed involving the reactive cysteines. Under reducing conditions zinc is bound to the reactive cysteines and the protein is inactive.

The protein localises to the cytoplasm. Redox regulated molecular chaperone. Protects both thermally unfolding and oxidatively damaged proteins from irreversible aggregation. Plays an important role in the bacterial defense system toward oxidative stress. This chain is 33 kDa chaperonin, found in Clostridium botulinum (strain Okra / Type B1).